The sequence spans 191 residues: Penicillin-binding protein activator LpoB (191 aa).

The N-terminal stretch at Met-1–Ser-16 is a signal peptide. The N-palmitoyl cysteine moiety is linked to residue Cys-17. A lipid anchor (S-diacylglycerol cysteine) is attached at Cys-17. A disordered region spans residues Gln-25–Lys-48.

Belongs to the LpoB family. In terms of assembly, interacts with PBP1b.

Its subcellular location is the cell outer membrane. Functionally, regulator of peptidoglycan synthesis that is essential for the function of penicillin-binding protein 1B (PBP1b). The polypeptide is Penicillin-binding protein activator LpoB (Xenorhabdus nematophila (strain ATCC 19061 / DSM 3370 / CCUG 14189 / LMG 1036 / NCIMB 9965 / AN6)).